The sequence spans 161 residues: Cytochrome b6-f complex subunit 4 (161 aa).

Helical transmembrane passes span leucine 37–valine 57, leucine 96–glutamate 116, and threonine 132–isoleucine 152.

The protein belongs to the cytochrome b family. PetD subfamily. The 4 large subunits of the cytochrome b6-f complex are cytochrome b6, subunit IV (17 kDa polypeptide, PetD), cytochrome f and the Rieske protein, while the 4 small subunits are PetG, PetL, PetM and PetN. The complex functions as a dimer.

The protein resides in the cellular thylakoid membrane. Its function is as follows. Component of the cytochrome b6-f complex, which mediates electron transfer between photosystem II (PSII) and photosystem I (PSI), cyclic electron flow around PSI, and state transitions. The polypeptide is Cytochrome b6-f complex subunit 4 (Cyanothece sp. (strain PCC 7425 / ATCC 29141)).